We begin with the raw amino-acid sequence, 188 residues long: Pyridoxal 5'-phosphate synthase subunit PdxT (188 aa).

An L-glutamine-binding site is contributed by 46–48 (GES). The active-site Nucleophile is C78. Residues R105 and 134–135 (IR) contribute to the L-glutamine site. Catalysis depends on charge relay system residues H170 and E172.

This sequence belongs to the glutaminase PdxT/SNO family. As to quaternary structure, in the presence of PdxS, forms a dodecamer of heterodimers. Only shows activity in the heterodimer.

The catalysed reaction is aldehydo-D-ribose 5-phosphate + D-glyceraldehyde 3-phosphate + L-glutamine = pyridoxal 5'-phosphate + L-glutamate + phosphate + 3 H2O + H(+). It carries out the reaction L-glutamine + H2O = L-glutamate + NH4(+). Its pathway is cofactor biosynthesis; pyridoxal 5'-phosphate biosynthesis. In terms of biological role, catalyzes the hydrolysis of glutamine to glutamate and ammonia as part of the biosynthesis of pyridoxal 5'-phosphate. The resulting ammonia molecule is channeled to the active site of PdxS. The chain is Pyridoxal 5'-phosphate synthase subunit PdxT from Moorella thermoacetica (strain ATCC 39073 / JCM 9320).